Reading from the N-terminus, the 233-residue chain is Favin (233 aa).

Residues Glu-120 and Asp-122 each coordinate Mn(2+). 4 residues coordinate Ca(2+): Asp-122, Phe-124, Asn-126, and Asp-130. Mn(2+) contacts are provided by Asp-130 and His-137. N-linked (GlcNAc...) asparagine glycosylation is present at Asn-168.

It belongs to the leguminous lectin family. Heterodimer of an alpha and a beta chain.

This is Favin from Vicia faba (Broad bean).